Consider the following 393-residue polypeptide: Probable acetyl-CoA acetyltransferase (393 aa).

Cysteine 88 acts as the Acyl-thioester intermediate in catalysis. Active-site proton acceptor residues include histidine 349 and cysteine 379.

The protein belongs to the thiolase-like superfamily. Thiolase family.

The catalysed reaction is 2 acetyl-CoA = acetoacetyl-CoA + CoA. The chain is Probable acetyl-CoA acetyltransferase (fadA4) from Mycobacterium leprae (strain TN).